A 327-amino-acid chain; its full sequence is L-lactate dehydrogenase (327 aa).

NAD(+)-binding positions include V18, D39, R44, Y69, and 83-84 (GL). Residues Q86, R92, and 124–127 (NPVD) each bind substrate. NAD(+) is bound by residues 122–124 (AAN) and S147. Substrate is bound at residue 152–155 (DSAR). Positions 157 and 172 each coordinate beta-D-fructose 1,6-bisphosphate. H179 (proton acceptor) is an active-site residue. Phosphotyrosine is present on Y224. Residue T233 participates in substrate binding.

Belongs to the LDH/MDH superfamily. LDH family. In terms of assembly, homotetramer.

The protein resides in the cytoplasm. The enzyme catalyses (S)-lactate + NAD(+) = pyruvate + NADH + H(+). The protein operates within fermentation; pyruvate fermentation to lactate; (S)-lactate from pyruvate: step 1/1. Allosterically activated by fructose 1,6-bisphosphate (FBP). Catalyzes the conversion of lactate to pyruvate. This chain is L-lactate dehydrogenase, found in Streptococcus suis (strain 98HAH33).